The primary structure comprises 274 residues: NH(3)-dependent NAD(+) synthetase (274 aa).

Gly-46 to Ser-53 serves as a coordination point for ATP. Residue Asp-52 participates in Mg(2+) binding. Arg-140 provides a ligand contact to deamido-NAD(+). Residue Thr-160 participates in ATP binding. Residue Glu-165 coordinates Mg(2+). Deamido-NAD(+)-binding residues include Lys-173 and Asp-180. ATP contacts are provided by Lys-189 and Thr-211. A deamido-NAD(+)-binding site is contributed by His-260–Lys-261.

The protein belongs to the NAD synthetase family. Homodimer.

The enzyme catalyses deamido-NAD(+) + NH4(+) + ATP = AMP + diphosphate + NAD(+) + H(+). The protein operates within cofactor biosynthesis; NAD(+) biosynthesis; NAD(+) from deamido-NAD(+) (ammonia route): step 1/1. Its function is as follows. Catalyzes the ATP-dependent amidation of deamido-NAD to form NAD. Uses ammonia as a nitrogen source. This is NH(3)-dependent NAD(+) synthetase from Listeria monocytogenes serovar 1/2a (strain ATCC BAA-679 / EGD-e).